The primary structure comprises 99 residues: RING finger protein Z (99 aa).

Gly-2 carries the N-myristoyl glycine; by host lipid modification. An RING-type; atypical zinc finger spans residues Cys-31–Cys-67. Positions Lys-74–Pro-99 are disordered. The span at Pro-77 to Ala-89 shows a compositional bias: low complexity. A PTAP/PSAP motif motif is present at residues Pro-81–Pro-84. Residues Pro-94–Tyr-97 carry the PPXY motif motif.

Belongs to the arenaviridae Z protein family. In terms of assembly, interacts with protein NP; this interaction probably directs the encapsidated genome to budding sites. Interacts (via RING domain) with polymerase L; this interaction inhibits viral transcription and replication, Z partially blocks the product exit tunnel for the releasing nascent RNA product. Interacts with the glycoprotein complex; this interaction plays a role in virion budding. Interacts with host eIF4E; this interaction results in eIF4E reduced affinity for its substrate, the 5'-m7 G cap structure. Interacts (via late-budding domain) with host TSG101; this interaction is essential for budding and release of viral particles. Interacts with host RPLP0; this interaction may serve to load ribosome-like particles inside the virion. Interacts with host PML; this interaction induces PML bodies redistribution in the cytoplasm upon viral infection. Interacts with host TAX1BP1. Myristoylation is required for the role of RING finger protein Z in assembly and budding.

The protein localises to the virion. Its subcellular location is the host cytoplasm. It localises to the host perinuclear region. It is found in the host cell membrane. Functionally, plays a crucial role in virion assembly and budding. Expressed late in the virus life cycle, it acts as an inhibitor of viral transcription and RNA synthesis by interacting with the viral polymerase L. Presumably recruits the NP encapsidated genome to cellular membranes at budding sites via direct interaction with NP. Plays critical roles in the final steps of viral release by interacting with host TSG101, a member of the vacuolar protein-sorting pathway and using other cellular host proteins involved in vesicle formation pathway. The budding of the virus progeny occurs after association of protein Z with the viral glycoprotein complex SSP-GP1-GP2 at the cell periphery, step that requires myristoylation of protein Z. Also selectively represses protein production by associating with host eIF4E. In cell-based minigenome assay, has an inhibitory effect on the ribonucleoprotein machinery (vRNP), which is responsible for the replication and transcription of the viral genome. The polypeptide is RING finger protein Z (Homo sapiens (Human)).